The primary structure comprises 607 residues: UvrABC system protein C (607 aa).

The region spanning 15–93 (SEPGVYCMLD…IKKYQPRYNI (79 aa)) is the GIY-YIG domain. Residues 202–237 (HEVIADLIKKMEAASQQLNFELAAKVRDQIMLLRKM) enclose the UVR domain.

Belongs to the UvrC family. Interacts with UvrB in an incision complex.

The protein resides in the cytoplasm. In terms of biological role, the UvrABC repair system catalyzes the recognition and processing of DNA lesions. UvrC both incises the 5' and 3' sides of the lesion. The N-terminal half is responsible for the 3' incision and the C-terminal half is responsible for the 5' incision. In Pseudoalteromonas translucida (strain TAC 125), this protein is UvrABC system protein C.